We begin with the raw amino-acid sequence, 414 residues long: L-cysteine:1D-myo-inositol 2-amino-2-deoxy-alpha-D-glucopyranoside ligase (414 aa).

Cys44 is a Zn(2+) binding site. L-cysteinyl-5'-AMP contacts are provided by residues 44 to 47 (CGIT), Thr59, and 82 to 84 (NIT). The 'HIGH' region signature appears at 46–56 (ITPYDSTHLGH). The short motif at 188–193 (ERGGDP) is the 'ERGGDP' region element. Residue Trp228 participates in L-cysteinyl-5'-AMP binding. Zn(2+) is bound at residue Cys232. Position 250 to 252 (250 to 252 (GSD)) interacts with L-cysteinyl-5'-AMP. His257 contacts Zn(2+). Ile284 provides a ligand contact to L-cysteinyl-5'-AMP. Positions 290–294 (KMSKS) match the 'KMSKS' region motif.

This sequence belongs to the class-I aminoacyl-tRNA synthetase family. MshC subfamily. As to quaternary structure, monomer. Zn(2+) is required as a cofactor.

The catalysed reaction is 1D-myo-inositol 2-amino-2-deoxy-alpha-D-glucopyranoside + L-cysteine + ATP = 1D-myo-inositol 2-(L-cysteinylamino)-2-deoxy-alpha-D-glucopyranoside + AMP + diphosphate + H(+). Its function is as follows. Catalyzes the ATP-dependent condensation of GlcN-Ins and L-cysteine to form L-Cys-GlcN-Ins. This Corynebacterium aurimucosum (strain ATCC 700975 / DSM 44827 / CIP 107346 / CN-1) (Corynebacterium nigricans) protein is L-cysteine:1D-myo-inositol 2-amino-2-deoxy-alpha-D-glucopyranoside ligase.